We begin with the raw amino-acid sequence, 416 residues long: Adenylosuccinate synthetase (416 aa).

GTP-binding positions include 12-18 (GDEGKGK) and 40-42 (GHT). The active-site Proton acceptor is Asp13. Positions 13 and 40 each coordinate Mg(2+). IMP is bound by residues 13–16 (DEGK), 38–41 (NAGH), Thr125, Arg139, Gln219, Thr234, and Arg298. His41 functions as the Proton donor in the catalytic mechanism. A substrate-binding site is contributed by 294 to 300 (TVTGRKR). GTP is bound by residues Arg300, 326-328 (KLD), and 404-406 (STS).

It belongs to the adenylosuccinate synthetase family. Homodimer. Mg(2+) serves as cofactor.

The protein localises to the cytoplasm. The enzyme catalyses IMP + L-aspartate + GTP = N(6)-(1,2-dicarboxyethyl)-AMP + GDP + phosphate + 2 H(+). The protein operates within purine metabolism; AMP biosynthesis via de novo pathway; AMP from IMP: step 1/2. Its function is as follows. Plays an important role in the de novo pathway of purine nucleotide biosynthesis. Catalyzes the first committed step in the biosynthesis of AMP from IMP. In Aliarcobacter butzleri (strain RM4018) (Arcobacter butzleri), this protein is Adenylosuccinate synthetase.